The following is an 809-amino-acid chain: Carbon monoxide dehydrogenase large chain (809 aa).

Cys388 is a binding site for Cu(+). A Mo-molybdopterin cytosine dinucleotide-binding site is contributed by Glu763.

Dimer of heterotrimers. Each heterotrimer consists of a large, a medium and a small subunit. Cu(+) is required as a cofactor. It depends on Mo-molybdopterin cytosine dinucleotide as a cofactor.

It catalyses the reaction CO + a quinone + H2O = a quinol + CO2. In terms of biological role, catalyzes the oxidation of carbon monoxide to carbon dioxide. The chain is Carbon monoxide dehydrogenase large chain (coxL) from Afipia carboxidovorans (strain ATCC 49405 / DSM 1227 / KCTC 32145 / OM5) (Oligotropha carboxidovorans).